Here is a 565-residue protein sequence, read N- to C-terminus: Anaphase-promoting complex subunit 7 (565 aa).

TPR repeat units follow at residues 101 to 134 (EIEV…RQRT), 169 to 202 (LDAI…LDWL), 203 to 236 (SVWI…LRDN), 237 to 270 (VDLL…DPYL), 339 to 372 (VQAL…APCR), 373 to 406 (LDCY…LGAN), 407 to 441 (AQTL…RPDY), 442 to 474 (IKAV…NQSD), 475 to 508 (CVLH…DPND), and 509 to 531 (QKSL…TQEE). At Lys229 the chain carries N6-acetyllysine. The segment covering 513–523 (EGMQKMEKEES) has biased composition (basic and acidic residues). Residues 513–565 (EGMQKMEKEESPTDATQEEDVDDMEGSGEEGDLEGSDSEAAQWADQEQWFGMQ) form a disordered region. Residues 528–549 (TQEEDVDDMEGSGEEGDLEGSD) are compositionally biased toward acidic residues.

The protein belongs to the APC7 family. As to quaternary structure, V-shaped homodimer. The mammalian APC/C is composed at least of 14 distinct subunits ANAPC1, ANAPC2, CDC27/APC3, ANAPC4, ANAPC5, CDC16/APC6, ANAPC7, CDC23/APC8, ANAPC10, ANAPC11, CDC26/APC12, ANAPC13, ANAPC15 and ANAPC16 that assemble into a complex of at least 19 chains with a combined molecular mass of around 1.2 MDa; APC/C interacts with FZR1 and FBXO5.

Its subcellular location is the cytoplasm. It is found in the cytoskeleton. It localises to the nucleus. The protein localises to the spindle. The protein operates within protein modification; protein ubiquitination. Its function is as follows. Component of the anaphase promoting complex/cyclosome (APC/C), a cell cycle-regulated E3 ubiquitin ligase that controls progression through mitosis and the G1 phase of the cell cycle. The APC/C complex acts by mediating ubiquitination and subsequent degradation of target proteins: it mainly mediates the formation of 'Lys-11'-linked polyubiquitin chains and, to a lower extent, the formation of 'Lys-48'- and 'Lys-63'-linked polyubiquitin chains. The APC/C complex catalyzes assembly of branched 'Lys-11'-/'Lys-48'-linked branched ubiquitin chains on target proteins. APC7 is not required for the assembly of the APC/C complex, but has an enzyme-substrate adapter activity mediating the processive ubiquitination of specific substrates. Involved in brain development through the specific ubiquitination and clearance of MKI67 from constitutive heterochromatin after neuronal progenitors exit mitosis. The protein is Anaphase-promoting complex subunit 7 of Homo sapiens (Human).